The following is a 404-amino-acid chain: Probable tRNA sulfurtransferase (404 aa).

The 106-residue stretch at 60–165 (QPVAESLKQI…EEAAYISYET (106 aa)) folds into the THUMP domain. ATP contacts are provided by residues 183–184 (ML), 208–209 (HF), Arg-265, Gly-287, and Gln-296.

It belongs to the ThiI family.

Its subcellular location is the cytoplasm. It catalyses the reaction [ThiI sulfur-carrier protein]-S-sulfanyl-L-cysteine + a uridine in tRNA + 2 reduced [2Fe-2S]-[ferredoxin] + ATP + H(+) = [ThiI sulfur-carrier protein]-L-cysteine + a 4-thiouridine in tRNA + 2 oxidized [2Fe-2S]-[ferredoxin] + AMP + diphosphate. The enzyme catalyses [ThiS sulfur-carrier protein]-C-terminal Gly-Gly-AMP + S-sulfanyl-L-cysteinyl-[cysteine desulfurase] + AH2 = [ThiS sulfur-carrier protein]-C-terminal-Gly-aminoethanethioate + L-cysteinyl-[cysteine desulfurase] + A + AMP + 2 H(+). The protein operates within cofactor biosynthesis; thiamine diphosphate biosynthesis. In terms of biological role, catalyzes the ATP-dependent transfer of a sulfur to tRNA to produce 4-thiouridine in position 8 of tRNAs, which functions as a near-UV photosensor. Also catalyzes the transfer of sulfur to the sulfur carrier protein ThiS, forming ThiS-thiocarboxylate. This is a step in the synthesis of thiazole, in the thiamine biosynthesis pathway. The sulfur is donated as persulfide by IscS. In Streptococcus sanguinis (strain SK36), this protein is Probable tRNA sulfurtransferase.